Here is a 113-residue protein sequence, read N- to C-terminus: MSASVVSVISRFLEEYLSSTPQRLKLLDAYLLYILLTGALQFGYCLLVGTFPFNSFLSGFISCVGSFILAVRLRIQINPQNKADFQGISPERAFADFLFASTILHLVVMNFVG.

Ser2 carries the N-acetylserine modification. At 2–30 (SASVVSVISRFLEEYLSSTPQRLKLLDAY) the chain is on the cytoplasmic side. A helical transmembrane segment spans residues 31 to 51 (LLYILLTGALQFGYCLLVGTF). Pro52 is a topological domain (lumenal). The chain crosses the membrane as a helical span at residues 53–73 (FNSFLSGFISCVGSFILAVRL). At 74–92 (RIQINPQNKADFQGISPER) the chain is on the cytoplasmic side. A helical transmembrane segment spans residues 93 to 113 (AFADFLFASTILHLVVMNFVG).

The protein belongs to the DAD/OST2 family. As to quaternary structure, component of the oligosaccharyltransferase (OST) complex. OST exists in two different complex forms which contain common core subunits RPN1, RPN2, OST48, OST4, DAD1 and TMEM258, either STT3A or STT3B as catalytic subunits, and form-specific accessory subunits. STT3A complex assembly occurs through the formation of 3 subcomplexes. Subcomplex 1 contains RPN1 and TMEM258, subcomplex 2 contains the STT3A-specific subunits STT3A, DC2/OSTC, and KCP2 as well as the core subunit OST4, and subcomplex 3 contains RPN2, DAD1, and OST48. The STT3A complex can form stable complexes with the Sec61 complex or with both the Sec61 and TRAP complexes.

The protein resides in the endoplasmic reticulum membrane. The protein operates within protein modification; protein glycosylation. Subunit of the oligosaccharyl transferase (OST) complex that catalyzes the initial transfer of a defined glycan (Glc(3)Man(9)GlcNAc(2) in eukaryotes) from the lipid carrier dolichol-pyrophosphate to an asparagine residue within an Asn-X-Ser/Thr consensus motif in nascent polypeptide chains, the first step in protein N-glycosylation. N-glycosylation occurs cotranslationally and the complex associates with the Sec61 complex at the channel-forming translocon complex that mediates protein translocation across the endoplasmic reticulum (ER). All subunits are required for a maximal enzyme activity. In Pongo abelii (Sumatran orangutan), this protein is Dolichyl-diphosphooligosaccharide--protein glycosyltransferase subunit DAD1.